Reading from the N-terminus, the 70-residue chain is Homeobox protein CDX (70 aa).

A DNA-binding region (homeobox) is located at residues 1–60 (PDKYRVVYTDYQRLELEKEFHYSRYITMNRKAELAKSLDLTERQIKIWFQNRRAKERKIN).

It belongs to the Caudal homeobox family.

The protein localises to the nucleus. The protein is Homeobox protein CDX (CDX) of Lineus sanguineus (Ribbon worm).